Consider the following 668-residue polypeptide: UvrABC system protein B (668 aa).

The region spanning 25–414 (RGLHAGARFQ…IVEQLIRPTG (390 aa)) is the Helicase ATP-binding domain. 38–45 (GVTGSGKT) lines the ATP pocket. Positions 91 to 114 (YYDYYQPESYVPARDLYIEKDASI) match the Beta-hairpin motif. One can recognise a Helicase C-terminal domain in the interval 431 to 594 (DICQRVKACS…TIKKSIEDIL (164 aa)). The 36-residue stretch at 627 to 662 (KKMVQALRLHMKVCARELRFEEAALIRDKILQLQRQ) folds into the UVR domain.

This sequence belongs to the UvrB family. As to quaternary structure, forms a heterotetramer with UvrA during the search for lesions. Interacts with UvrC in an incision complex.

It localises to the cytoplasm. Its function is as follows. The UvrABC repair system catalyzes the recognition and processing of DNA lesions. A damage recognition complex composed of 2 UvrA and 2 UvrB subunits scans DNA for abnormalities. Upon binding of the UvrA(2)B(2) complex to a putative damaged site, the DNA wraps around one UvrB monomer. DNA wrap is dependent on ATP binding by UvrB and probably causes local melting of the DNA helix, facilitating insertion of UvrB beta-hairpin between the DNA strands. Then UvrB probes one DNA strand for the presence of a lesion. If a lesion is found the UvrA subunits dissociate and the UvrB-DNA preincision complex is formed. This complex is subsequently bound by UvrC and the second UvrB is released. If no lesion is found, the DNA wraps around the other UvrB subunit that will check the other stand for damage. The sequence is that of UvrABC system protein B from Treponema pallidum (strain Nichols).